Reading from the N-terminus, the 106-residue chain is Small ribosomal subunit protein bS16 (106 aa).

Residues 84 to 106 (KREARNNPEKAVPRKERKAADGK) are disordered.

This Rhodopseudomonas palustris (strain ATCC BAA-98 / CGA009) protein is Small ribosomal subunit protein bS16.